Reading from the N-terminus, the 329-residue chain is MDPTTPAWGTESTTMDGNDQSLPLLCDKEALIPVFLILFIALVGLVGNGFVLWLLGFRMSRNAFSVYVLSLAGADFLFLCFQIINCLVYLRDFFCSISINFPSXFTTVMTCAYLAGLSMLSTISTERCLSVLWPIWYRCRRPRHLSAVVCVLLWALSLLLSILEGKFCGFLFSDGDFGWCQIFDFITAAWLIFLFVVLCASSLALLVRILCGSRGLPLTRLYLTILLTVLVFLLCGLPFGIQWFLILGFWNSDVLLCHIHLVSVVLSSLNSSANPIIYFFVGSFRKQWRLQQPILKLAFQRALQDTAEVDHSEGCFPQGTSEMSRSSLV.

Residues methionine 1 to proline 33 lie on the Extracellular side of the membrane. A helical transmembrane segment spans residues valine 34–leucine 54. Residues leucine 55–alanine 63 lie on the Cytoplasmic side of the membrane. The helical transmembrane segment at phenylalanine 64–isoleucine 84 threads the bilayer. At asparagine 85 to serine 96 the chain is on the extracellular side. The helical transmembrane segment at isoleucine 97–leucine 117 threads the bilayer. Topologically, residues serine 118–histidine 144 are cytoplasmic. A helical membrane pass occupies residues leucine 145–glycine 165. Residues lysine 166–aspartate 184 lie on the Extracellular side of the membrane. A helical transmembrane segment spans residues phenylalanine 185–leucine 205. Residues leucine 206–threonine 228 lie on the Cytoplasmic side of the membrane. Residues valine 229–phenylalanine 249 form a helical membrane-spanning segment. At tryptophan 250 to serine 263 the chain is on the extracellular side. A helical membrane pass occupies residues valine 264–phenylalanine 284. Residues arginine 285 to valine 329 are Cytoplasmic-facing.

Belongs to the G-protein coupled receptor 1 family. Mas subfamily.

It localises to the cell membrane. Mast cell-specific receptor for basic secretagogues, i.e. cationic amphiphilic drugs, as well as endo- or exogenous peptides, consisting of a basic head group and a hydrophobic core. Recognizes and binds small molecules containing a cyclized tetrahydroisoquinoline (THIQ), such as non-steroidal neuromuscular blocking drugs (NMBDs), including tubocurarine and atracurium. In response to these compounds, mediates pseudo-allergic reactions characterized by histamine release, inflammation and airway contraction. This is Mas-related G-protein coupled receptor member X2 (MRGPRX2) from Hoolock hoolock (Western hoolock gibbon).